The chain runs to 134 residues: Putative pre-16S rRNA nuclease (134 aa).

The protein belongs to the YqgF nuclease family.

The protein localises to the cytoplasm. In terms of biological role, could be a nuclease involved in processing of the 5'-end of pre-16S rRNA. The polypeptide is Putative pre-16S rRNA nuclease (Helicobacter pylori (strain J99 / ATCC 700824) (Campylobacter pylori J99)).